We begin with the raw amino-acid sequence, 420 residues long: Carbohydrate sulfotransferase 12 (420 aa).

Residues 1 to 5 (MAKSR) lie on the Cytoplasmic side of the membrane. A helical; Signal-anchor for type II membrane protein membrane pass occupies residues 6–26 (LFCLLVALGSVFMILFIIVYW). At 27–420 (DNVGTANLNL…YPKPDDLLSV (394 aa)) the chain is on the lumenal side. Residues Asn-76 and Asn-139 are each glycosylated (N-linked (GlcNAc...) asparagine). 176–182 (PKVACTN) provides a ligand contact to 3'-phosphoadenylyl sulfate. N-linked (GlcNAc...) asparagine glycosylation is present at Asn-215. Position 251 to 259 (251 to 259 (RDPFVRLIS)) interacts with 3'-phosphoadenylyl sulfate. Residues Asn-286 and Asn-376 are each glycosylated (N-linked (GlcNAc...) asparagine).

Belongs to the sulfotransferase 2 family.

It is found in the golgi apparatus membrane. It catalyses the reaction chondroitin beta-D-glucuronate + n 3'-phosphoadenylyl sulfate = chondroitin 4'-sulfate + n adenosine 3',5'-bisphosphate + n H(+). Catalyzes the transfer of sulfate to position 4 of the N-acetylgalactosamine (GalNAc) residue of chondroitin and desulfated dermatan sulfate. Chondroitin sulfate constitutes the predominant proteoglycan present in cartilage and is distributed on the surfaces of many cells and extracellular matrices. This is Carbohydrate sulfotransferase 12 (chst12) from Xenopus laevis (African clawed frog).